We begin with the raw amino-acid sequence, 334 residues long: D-fructose 1,6-bisphosphatase class 2/sedoheptulose 1,7-bisphosphatase (334 aa).

Asp33, Glu57, Asp85, and Glu88 together coordinate Mn(2+). Substrate contacts are provided by residues 88–90 (EGT), Tyr119, 164–166 (RAR), and 186–188 (DGD). Glu213 lines the Mn(2+) pocket.

The protein belongs to the FBPase class 2 family. As to quaternary structure, homotetramer. Mn(2+) is required as a cofactor.

It carries out the reaction beta-D-fructose 1,6-bisphosphate + H2O = beta-D-fructose 6-phosphate + phosphate. It catalyses the reaction D-sedoheptulose 1,7-bisphosphate + H2O = D-sedoheptulose 7-phosphate + phosphate. It functions in the pathway carbohydrate biosynthesis; Calvin cycle. Functionally, catalyzes the hydrolysis of fructose 1,6-bisphosphate (Fru 1,6-P2) and sedoheptulose 1,7-bisphosphate (Sed 1,7-P2) to fructose 6-phosphate and sedoheptulose 7-phosphate, respectively. This is D-fructose 1,6-bisphosphatase class 2/sedoheptulose 1,7-bisphosphatase from Synechococcus sp. (strain CC9902).